The sequence spans 597 residues: Peptidyl-prolyl cis-trans isomerase-like 2 (597 aa).

Positions 41–114 (KKLPFNFCAA…TTDSDENKGD (74 aa)) constitute a U-box domain. The PPIase cyclophilin-type domain occupies 328 to 483 (NKGYVRMETN…NKIVIKDMII (156 aa)). Over residues 495 to 519 (KKQKEGEEERKREVARQGGTEDDRT) the composition is skewed to basic and acidic residues. Disordered regions lie at residues 495 to 521 (KKQK…RTTW) and 560 to 597 (ATTT…FDGW).

It belongs to the cyclophilin-type PPIase family. PPIL2 subfamily.

It localises to the nucleus. It carries out the reaction [protein]-peptidylproline (omega=180) = [protein]-peptidylproline (omega=0). The enzyme catalyses S-ubiquitinyl-[E2 ubiquitin-conjugating enzyme]-L-cysteine + [acceptor protein]-L-lysine = [E2 ubiquitin-conjugating enzyme]-L-cysteine + N(6)-ubiquitinyl-[acceptor protein]-L-lysine.. It participates in protein modification; protein ubiquitination. May catalyze the cis-trans isomerization of proline imidic peptide bonds in oligopeptides thereby assisting the folding of proteins. May also function as a chaperone, playing a role in intracellular transport of proteins. May also have a protein ubiquitin ligase activity acting as an E3 ubiquitin protein ligase or as a ubiquitin-ubiquitin ligase promoting elongation of ubiquitin chains on proteins. In Neurospora crassa (strain ATCC 24698 / 74-OR23-1A / CBS 708.71 / DSM 1257 / FGSC 987), this protein is Peptidyl-prolyl cis-trans isomerase-like 2 (ppi-2).